Reading from the N-terminus, the 409-residue chain is Bone morphogenetic protein 4 (409 aa).

The first 19 residues, 1-19 (MIPGNRMLMVVLLCQVLLG), serve as a signal peptide directing secretion. The propeptide occupies 20-293 (GASHASLIPE…ALTRRRRAKR (274 aa)). Residue Ser-91 is modified to Phosphoserine. The disordered stretch occupies residues 91–110 (SGEEEEEEQMPSGGLEYPER). 4 N-linked (GlcNAc...) asparagine glycosylation sites follow: Asn-144, Asn-209, Asn-351, and Asn-366. 3 cysteine pairs are disulfide-bonded: Cys-309-Cys-374, Cys-338-Cys-406, and Cys-342-Cys-408.

It belongs to the TGF-beta family. Homodimer; disulfide-linked. Interacts with GREM2. Part of a complex consisting of TWSG1 and CHRD. Interacts with the serine proteases, HTRA1 and HTRA3; the interaction with either inhibits BMP4-mediated signaling. The HTRA protease activity is required for this inhibition. Interacts with SOSTDC1. Interacts with FBN1 (via N-terminal domain) and FBN2. Interacts with type I receptor BMPR1A. Interacts with type II receptor BMPR2. Interacts with FSTL1; this interaction inhibits the activation of the BMP4/Smad1/5/8 signaling pathway. Interacts with SCUBE3. Interacts with TGFBR3.

It localises to the secreted. It is found in the extracellular space. The protein localises to the extracellular matrix. In terms of biological role, growth factor of the TGF-beta superfamily that plays essential roles in many developmental processes, including neurogenesis, vascular development, angiogenesis and osteogenesis. Acts in concert with PTHLH/PTHRP to stimulate ductal outgrowth during embryonic mammary development and to inhibit hair follicle induction. Initiates the canonical BMP signaling cascade by associating with type I receptor BMPR1A and type II receptor BMPR2. Once all three components are bound together in a complex at the cell surface, BMPR2 phosphorylates and activates BMPR1A. In turn, BMPR1A propagates signal by phosphorylating SMAD1/5/8 that travel to the nucleus and act as activators and repressors of transcription of target genes. Positively regulates the expression of odontogenic development regulator MSX1 via inducing the IPO7-mediated import of SMAD1 to the nucleus. Required for MSX1-mediated mesenchymal molar tooth bud development beyond the bud stage, via promoting Wnt signaling. Acts as a positive regulator of odontoblast differentiation during mesenchymal tooth germ formation, expression is repressed during the bell stage by MSX1-mediated inhibition of CTNNB1 signaling. Able to induce its own expression in dental mesenchymal cells and also in the neighboring dental epithelial cells via an MSX1-mediated pathway. Can also signal through non-canonical BMP pathways such as ERK/MAP kinase, PI3K/Akt, or SRC cascades. For example, induces SRC phosphorylation which, in turn, activates VEGFR2, leading to an angiogenic response. This Oryctolagus cuniculus (Rabbit) protein is Bone morphogenetic protein 4 (BMP4).